The following is a 308-amino-acid chain: Ribosomal RNA large subunit methyltransferase F (308 aa).

The interval Asp-190–Asp-212 is disordered.

This sequence belongs to the methyltransferase superfamily. METTL16/RlmF family.

It localises to the cytoplasm. It carries out the reaction adenosine(1618) in 23S rRNA + S-adenosyl-L-methionine = N(6)-methyladenosine(1618) in 23S rRNA + S-adenosyl-L-homocysteine + H(+). In terms of biological role, specifically methylates the adenine in position 1618 of 23S rRNA. The sequence is that of Ribosomal RNA large subunit methyltransferase F from Citrobacter koseri (strain ATCC BAA-895 / CDC 4225-83 / SGSC4696).